The sequence spans 85 residues: Small ribosomal subunit protein uS17 (85 aa).

The protein belongs to the universal ribosomal protein uS17 family. As to quaternary structure, part of the 30S ribosomal subunit.

Its function is as follows. One of the primary rRNA binding proteins, it binds specifically to the 5'-end of 16S ribosomal RNA. The polypeptide is Small ribosomal subunit protein uS17 (Anaeromyxobacter sp. (strain Fw109-5)).